A 433-amino-acid polypeptide reads, in one-letter code: Succinate--CoA ligase [ADP-forming] subunit beta, mitochondrial (433 aa).

Residues 1-23 (MLTRSVLRKAPRAFSPFLQKRNL) constitute a mitochondrion transit peptide. In terms of domain architecture, ATP-grasp spans 31–273 (HDILRKFGVD…ISQEDPDEAR (243 aa)). ATP contacts are provided by residues K68, 75 to 77 (GRG), and E136. Residues N228 and D242 each contribute to the Mg(2+) site. Residues N293 and 350–352 (GIV) contribute to the substrate site.

It belongs to the succinate/malate CoA ligase beta subunit family. In terms of assembly, heterodimer of an alpha and a beta subunit. The cofactor is Mg(2+).

The protein resides in the mitochondrion. The catalysed reaction is succinate + ATP + CoA = succinyl-CoA + ADP + phosphate. Its pathway is carbohydrate metabolism; tricarboxylic acid cycle; succinate from succinyl-CoA (ligase route): step 1/1. Functionally, succinyl-CoA synthetase functions in the citric acid cycle (TCA), coupling the hydrolysis of succinyl-CoA to the synthesis of ATP and thus represents the only step of substrate-level phosphorylation in the TCA. The beta subunit provides nucleotide specificity of the enzyme and binds the substrate succinate, while the binding sites for coenzyme A and phosphate are found in the alpha subunit. The protein is Succinate--CoA ligase [ADP-forming] subunit beta, mitochondrial of Schizosaccharomyces pombe (strain 972 / ATCC 24843) (Fission yeast).